The primary structure comprises 303 residues: Crk-like protein (303 aa).

Residues 14–102 (WYMGPVTRQE…LDTTTLIEPA (89 aa)) form the SH2 domain. Residues 123–183 (ENLEYVRTLY…PVPYVEKLVR (61 aa)) form the SH3 1 domain. Tyrosine 127 bears the Phosphotyrosine mark. Residues 184-203 (SSPHGKHGNRNSNSYGIPEP) are disordered. Phosphotyrosine is present on tyrosine 207. Residues 235–296 (NGPVFAKAIQ…PFTHVKIFDP (62 aa)) enclose the SH3 2 domain.

It belongs to the CRK family. In terms of assembly, interacts with DOCK2 and EPOR. Interacts with phosphorylated CBLB and IRS4. Interacts with INPP5D/SHIP1. Interacts with BCAR1/CAS and NEDD9/HEF1. Phosphorylated on tyrosine. Phosphorylation is prominent during early development, but decreases at later embryonic stages and in newborn mice.

In terms of biological role, may mediate the transduction of intracellular signals. The chain is Crk-like protein (Crkl) from Mus musculus (Mouse).